A 300-amino-acid chain; its full sequence is NAD kinase (300 aa).

Residue aspartate 80 is the Proton acceptor of the active site. NAD(+) is bound by residues 80–81, 154–155, arginine 165, arginine 182, aspartate 184, 195–200, and glutamine 253; these read DG, ND, and TAYALS.

The protein belongs to the NAD kinase family. It depends on a divalent metal cation as a cofactor.

It is found in the cytoplasm. It carries out the reaction NAD(+) + ATP = ADP + NADP(+) + H(+). Functionally, involved in the regulation of the intracellular balance of NAD and NADP, and is a key enzyme in the biosynthesis of NADP. Catalyzes specifically the phosphorylation on 2'-hydroxyl of the adenosine moiety of NAD to yield NADP. This chain is NAD kinase, found in Aromatoleum aromaticum (strain DSM 19018 / LMG 30748 / EbN1) (Azoarcus sp. (strain EbN1)).